We begin with the raw amino-acid sequence, 453 residues long: Ribosomal protein uS12 methylthiotransferase RimO (453 aa).

The MTTase N-terminal domain occupies 9–124 (PKIGFVSLGC…VMDAVHKHMP (116 aa)). The [4Fe-4S] cluster site is built by Cys18, Cys54, Cys83, Cys155, Cys159, and Cys162. Positions 141–382 (LTPKHFAYLK…MLLQEEISKK (242 aa)) constitute a Radical SAM core domain. Positions 385–453 (QAKVGKTMRV…ADAHDLWAEA (69 aa)) constitute a TRAM domain.

The protein belongs to the methylthiotransferase family. RimO subfamily. [4Fe-4S] cluster serves as cofactor.

Its subcellular location is the cytoplasm. It catalyses the reaction L-aspartate(89)-[ribosomal protein uS12]-hydrogen + (sulfur carrier)-SH + AH2 + 2 S-adenosyl-L-methionine = 3-methylsulfanyl-L-aspartate(89)-[ribosomal protein uS12]-hydrogen + (sulfur carrier)-H + 5'-deoxyadenosine + L-methionine + A + S-adenosyl-L-homocysteine + 2 H(+). Catalyzes the methylthiolation of an aspartic acid residue of ribosomal protein uS12. The protein is Ribosomal protein uS12 methylthiotransferase RimO of Janthinobacterium sp. (strain Marseille) (Minibacterium massiliensis).